We begin with the raw amino-acid sequence, 91 residues long: Large ribosomal subunit protein bL27 (91 aa).

A disordered region spans residues M1 to F26.

This sequence belongs to the bacterial ribosomal protein bL27 family.

The polypeptide is Large ribosomal subunit protein bL27 (Chloroflexus aurantiacus (strain ATCC 29366 / DSM 635 / J-10-fl)).